The primary structure comprises 867 residues: Heat shock 70 kDa protein 17 (867 aa).

Residues M1–S24 form the signal peptide. Composition is skewed to polar residues over residues T560–E575 and D587–A598. Disordered regions lie at residues T560–G607 and P829–L867. Residues P833–L867 are compositionally biased toward basic and acidic residues. A Prevents secretion from ER motif is present at residues D865 to L867.

It belongs to the heat shock protein 70 (TC 1.A.33) family. HSP110/SSE subfamily.

It is found in the endoplasmic reticulum lumen. This chain is Heat shock 70 kDa protein 17 (HSP70-17), found in Arabidopsis thaliana (Mouse-ear cress).